A 504-amino-acid polypeptide reads, in one-letter code: ATP synthase subunit alpha 2 (504 aa).

An ATP-binding site is contributed by 169-176 (GDRQTGKT).

It belongs to the ATPase alpha/beta chains family. F-type ATPases have 2 components, CF(1) - the catalytic core - and CF(0) - the membrane proton channel. CF(1) has five subunits: alpha(3), beta(3), gamma(1), delta(1), epsilon(1). CF(0) has three main subunits: a(1), b(2) and c(9-12). The alpha and beta chains form an alternating ring which encloses part of the gamma chain. CF(1) is attached to CF(0) by a central stalk formed by the gamma and epsilon chains, while a peripheral stalk is formed by the delta and b chains.

It localises to the cell membrane. It carries out the reaction ATP + H2O + 4 H(+)(in) = ADP + phosphate + 5 H(+)(out). Functionally, produces ATP from ADP in the presence of a proton gradient across the membrane. The alpha chain is a regulatory subunit. This Listeria monocytogenes serotype 4b (strain F2365) protein is ATP synthase subunit alpha 2.